We begin with the raw amino-acid sequence, 435 residues long: MAETETTADRNVEIWKIKKLIKSLEAARGNGTSMISLIIPPKDQVSRVAKMLADEFGTASNIKSRVNRLSVLGAITSVQQRLKLYNKVPPNGLVVYCGTIVTDEGKEKKVNIDFEPFKPINTSLYLCDNKFHTEALTALLSDDNKFGFIVMDGNGALFGTLQGNTREVLHKFTVDLPKKHGRGGQSALRFARLRMEKRHNYVRKVAETAVQLFITNDRPNVTGLVLAGSADFKTELSQSDMFDQRLQVKILKLVDVSYGGENGFNQAIELSAEVLSNVKFIQEKKLIGRYFDEISQDTGKYCFGVDDTLKALEMGAVEILIVWENLDTMRYVLKNHTTDEEKILFLKPDQEKDKTHFTDKDTGVEMEMVESCSLLEWFANNYKKFGSTLEIVTDRSQEGSQFVKGFGGIGGMLRYRIDFQGMEFNDDDPDLYDDY.

Belongs to the eukaryotic release factor 1 family. Heterodimer of two subunits, one of which binds GTP.

Its subcellular location is the cytoplasm. Directs the termination of nascent peptide synthesis (translation) in response to the termination codons UAA, UAG and UGA. This is Eukaryotic peptide chain release factor subunit 1 (ERF1) from Polyandrocarpa misakiensis (Tunicate).